Reading from the N-terminus, the 608-residue chain is Dolichyl-diphosphooligosaccharide--protein glycosyltransferase subunit 1 (608 aa).

The first 25 residues, 1–25 (MESPVALLLLLLLCLGALAPTPGSA), serve as a signal peptide directing secretion. Over 26–440 (SSEAPPLVNE…FNKVLMLQEP (415 aa)) the chain is Lumenal. Residue lysine 188 is modified to N6-acetyllysine. An N-linked (GlcNAc...) asparagine glycan is attached at asparagine 300. The helical transmembrane segment at 441 to 458 (LLVVAAFYILFFTVIIYV) threads the bilayer. The Cytoplasmic portion of the chain corresponds to 459–608 (RLDFSITKDP…TKIDHILDAL (150 aa)). Lysine 539 carries the post-translational modification N6-acetyllysine; alternate. Lysine 539 is covalently cross-linked (Glycyl lysine isopeptide (Lys-Gly) (interchain with G-Cter in SUMO2); alternate).

It belongs to the OST1 family. Component of the oligosaccharyltransferase (OST) complex. OST exists in two different complex forms which contain common core subunits RPN1, RPN2, OST48, OST4, DAD1 and TMEM258, either STT3A or STT3B as catalytic subunits, and form-specific accessory subunits. STT3A complex assembly occurs through the formation of 3 subcomplexes. Subcomplex 1 contains RPN1 and TMEM258, subcomplex 2 contains the STT3A-specific subunits STT3A, DC2/OSTC, and KCP2 as well as the core subunit OST4, and subcomplex 3 contains RPN2, DAD1, and OST48. The STT3A complex can form stable complexes with the Sec61 complex or with both the Sec61 and TRAP complexes. Interacts with TMEM35A/NACHO. Ubiquitinated by the ECS(ASB11) complex. Ubiquitinated by RNF128, leading to degradation in a proteasome/lysosome-dependent manner. In terms of processing, ufmylated by UFL1 in response to endoplasmic reticulum stress, promoting reticulophagy of endoplasmic reticulum sheets.

Its subcellular location is the endoplasmic reticulum membrane. Its pathway is protein modification; protein glycosylation. Subunit of the oligosaccharyl transferase (OST) complex that catalyzes the initial transfer of a defined glycan (Glc(3)Man(9)GlcNAc(2) in eukaryotes) from the lipid carrier dolichol-pyrophosphate to an asparagine residue within an Asn-X-Ser/Thr consensus motif in nascent polypeptide chains, the first step in protein N-glycosylation. N-glycosylation occurs cotranslationally and the complex associates with the Sec61 complex at the channel-forming translocon complex that mediates protein translocation across the endoplasmic reticulum (ER). All subunits are required for a maximal enzyme activity. This is Dolichyl-diphosphooligosaccharide--protein glycosyltransferase subunit 1 from Mus musculus (Mouse).